The following is a 510-amino-acid chain: Glutamate--tRNA ligase (510 aa).

Residues 15-25 (PSPTGDPHVGT) carry the 'HIGH' region motif. Positions 256–260 (KISKR) match the 'KMSKS' region motif. Residue Lys-259 participates in ATP binding.

It belongs to the class-I aminoacyl-tRNA synthetase family. Glutamate--tRNA ligase type 1 subfamily. As to quaternary structure, monomer.

The protein resides in the cytoplasm. It carries out the reaction tRNA(Glu) + L-glutamate + ATP = L-glutamyl-tRNA(Glu) + AMP + diphosphate. Catalyzes the attachment of glutamate to tRNA(Glu) in a two-step reaction: glutamate is first activated by ATP to form Glu-AMP and then transferred to the acceptor end of tRNA(Glu). The protein is Glutamate--tRNA ligase of Fusobacterium nucleatum subsp. nucleatum (strain ATCC 25586 / DSM 15643 / BCRC 10681 / CIP 101130 / JCM 8532 / KCTC 2640 / LMG 13131 / VPI 4355).